Here is a 1048-residue protein sequence, read N- to C-terminus: 3-hydroxy-3-methylglutaryl-coenzyme A reductase (1048 aa).

At 1-32 the chain is on the cytoplasmic side; that stretch reads MDPVVKKPSPGGVQHRVTKGLRAIVGHACRHP. The chain crosses the membrane as a helical span at residues 33–53; that stretch reads IHTLLVTALTAATTHLHVLEG. Residues 54–220 are Lumenal-facing; sequence TYQAAHRGLA…FLHRVKHAET (167 aa). A helical membrane pass occupies residues 221–241; the sequence is VDLVIIGLSYLAMNMTVVSLF. Residues 222 to 403 enclose the SSD domain; that stretch reads DLVIIGLSYL…FTFYATILCV (182 aa). Residues 242-250 lie on the Cytoplasmic side of the membrane; the sequence is RVMRQLGSR. The helical transmembrane segment at 251-271 threads the bilayer; that stretch reads FWLATSVLLSGAFAFVLGLGI. Topologically, residues 272–276 are lumenal; the sequence is TTTCD. The chain crosses the membrane as a helical span at residues 277-297; it reads VPVDMLLLFEGIPYLVLTVGF. Over 298-348 the chain is Cytoplasmic; sequence EKPIQLTRAVLCVSEELRGGWQRPVPNGASSDDSRQSQLIPNIIQLAVDRE. Residues 349–369 form a helical membrane-spanning segment; the sequence is GWYIVRSYLLEIGALALGAVL. The Lumenal portion of the chain corresponds to 370-377; the sequence is RPNDSLGH. Asn372 carries an N-linked (GlcNAc...) asparagine glycan. The chain crosses the membrane as a helical span at residues 378-398; sequence FCFLAAWTLLIDAILLFTFYA. Residues 399 to 439 lie on the Cytoplasmic side of the membrane; that stretch reads TILCVKLEITRIRSPGGLGQVNAKHPSGIFGHKVKSTNITW. Residues 440 to 460 traverse the membrane as a helical segment; that stretch reads WKLLTVGGFVLCHFLQLSPFF. At 461-542 the chain is on the lumenal side; the sequence is YRVMGEYMAN…LDGLESPLGR (82 aa). 2 N-linked (GlcNAc...) asparagine glycosylation sites follow: Asn470 and Asn520. The chain crosses the membrane as a helical span at residues 543–563; the sequence is LCLMGALVVSLVLNNHLIHAA. Residues 564-1048 are Cytoplasmic-facing; the sequence is RWHAWPQARE…NRSAGATVKK (485 aa). Residue Glu729 is the Charge relay system of the active site. Residue 735–741 participates in CoA binding; the sequence is SASRGCK. NADP(+) contacts are provided by residues 796 to 798 and 823 to 831; these read SRF and DAMGMNMIS. Lys863 acts as the Charge relay system in catalysis. CoA is bound at residue 892 to 894; sequence VLK. Asp939 (charge relay system) is an active-site residue. Residue 1034-1035 coordinates CoA; the sequence is AH. Residue His1035 is the Proton donor of the active site. 1039-1040 serves as a coordination point for NADP(+); it reads NR.

The protein belongs to the HMG-CoA reductase family.

The protein resides in the endoplasmic reticulum membrane. The enzyme catalyses (R)-mevalonate + 2 NADP(+) + CoA = (3S)-3-hydroxy-3-methylglutaryl-CoA + 2 NADPH + 2 H(+). Its pathway is metabolic intermediate biosynthesis; (R)-mevalonate biosynthesis; (R)-mevalonate from acetyl-CoA: step 3/3. Its function is as follows. HMG-CoA reductase; part of the first module of ergosterol biosynthesis pathway that includes the early steps of the pathway, conserved across all eukaryotes, and which results in the formation of mevalonate from acetyl-coenzyme A (acetyl-CoA). In this module, the cytosolic acetyl-CoA acetyltransferase catalyzes the formation of acetoacetyl-CoA. The hydroxymethylglutaryl-CoA synthase then condenses acetyl-CoA with acetoacetyl-CoA to form HMG-CoA. The rate-limiting step of the early module is the reduction to mevalonate by the 3-hydroxy-3-methylglutaryl-coenzyme A (HMG-CoA) reductase. The polypeptide is 3-hydroxy-3-methylglutaryl-coenzyme A reductase (Aspergillus terreus (strain NIH 2624 / FGSC A1156)).